A 214-amino-acid polypeptide reads, in one-letter code: Dephospho-CoA kinase (214 aa).

In terms of domain architecture, DPCK spans 3 to 202 (KIGLTGGIGS…DRWLALAGAA (200 aa)). 11 to 16 (GSGKSR) lines the ATP pocket.

It belongs to the CoaE family.

The protein localises to the cytoplasm. The catalysed reaction is 3'-dephospho-CoA + ATP = ADP + CoA + H(+). It participates in cofactor biosynthesis; coenzyme A biosynthesis; CoA from (R)-pantothenate: step 5/5. In terms of biological role, catalyzes the phosphorylation of the 3'-hydroxyl group of dephosphocoenzyme A to form coenzyme A. This is Dephospho-CoA kinase from Bordetella bronchiseptica (strain ATCC BAA-588 / NCTC 13252 / RB50) (Alcaligenes bronchisepticus).